A 285-amino-acid chain; its full sequence is tRNA (guanine-N(7)-)-methyltransferase (285 aa).

S-adenosyl-L-methionine contacts are provided by residues Gly102, 125 to 126 (EI), 160 to 161 (NA), and Cys180. Asp183 is a catalytic residue. 258-260 (TEE) lines the S-adenosyl-L-methionine pocket.

This sequence belongs to the class I-like SAM-binding methyltransferase superfamily. TrmB family. As to quaternary structure, forms a complex with TRM82.

Its subcellular location is the nucleus. It carries out the reaction guanosine(46) in tRNA + S-adenosyl-L-methionine = N(7)-methylguanosine(46) in tRNA + S-adenosyl-L-homocysteine. It participates in tRNA modification; N(7)-methylguanine-tRNA biosynthesis. Functionally, catalyzes the formation of N(7)-methylguanine at position 46 (m7G46) in tRNA. The protein is tRNA (guanine-N(7)-)-methyltransferase of Candida glabrata (strain ATCC 2001 / BCRC 20586 / JCM 3761 / NBRC 0622 / NRRL Y-65 / CBS 138) (Yeast).